A 387-amino-acid polypeptide reads, in one-letter code: 1-deoxy-D-xylulose 5-phosphate reductoisomerase (387 aa).

Positions 10, 11, 12, 13, 38, and 119 each coordinate NADPH. Lys-120 lines the 1-deoxy-D-xylulose 5-phosphate pocket. Glu-121 is a binding site for NADPH. Asp-145 provides a ligand contact to Mn(2+). Positions 146, 147, 170, and 193 each coordinate 1-deoxy-D-xylulose 5-phosphate. Glu-147 provides a ligand contact to Mn(2+). Residue Gly-199 coordinates NADPH. 4 residues coordinate 1-deoxy-D-xylulose 5-phosphate: Ser-206, Asn-211, Lys-212, and Glu-215. Glu-215 contacts Mn(2+).

Belongs to the DXR family. The cofactor is Mg(2+). Requires Mn(2+) as cofactor.

It catalyses the reaction 2-C-methyl-D-erythritol 4-phosphate + NADP(+) = 1-deoxy-D-xylulose 5-phosphate + NADPH + H(+). The protein operates within isoprenoid biosynthesis; isopentenyl diphosphate biosynthesis via DXP pathway; isopentenyl diphosphate from 1-deoxy-D-xylulose 5-phosphate: step 1/6. In terms of biological role, catalyzes the NADPH-dependent rearrangement and reduction of 1-deoxy-D-xylulose-5-phosphate (DXP) to 2-C-methyl-D-erythritol 4-phosphate (MEP). In Wolbachia pipientis wMel, this protein is 1-deoxy-D-xylulose 5-phosphate reductoisomerase.